We begin with the raw amino-acid sequence, 382 residues long: Mannitol-1-phosphate 5-dehydrogenase (382 aa).

Position 3 to 14 (3 to 14) interacts with NAD(+); it reads ALHFGAGNIGRG.

It belongs to the mannitol dehydrogenase family.

It carries out the reaction D-mannitol 1-phosphate + NAD(+) = beta-D-fructose 6-phosphate + NADH + H(+). This Pectobacterium atrosepticum (strain SCRI 1043 / ATCC BAA-672) (Erwinia carotovora subsp. atroseptica) protein is Mannitol-1-phosphate 5-dehydrogenase.